The following is an 879-amino-acid chain: Pentatricopeptide repeat-containing protein At1g71210, mitochondrial (879 aa).

Residues 1–44 (MLRCWSVTVERSCEGMLLRRRILSLSASSFRNFTSGNNGDAIPF) constitute a mitochondrion transit peptide. PPR repeat units lie at residues 181-215 (SLRL…GLDL), 216-246 (DSFG…ISVR), 250-280 (CAVT…LLPN), 285-319 (CGSG…GTVN), 320-355 (MDRA…GCEL), 356-390 (EVFR…GVSP), 391-425 (NKKT…GFAP), 426-460 (TAMS…GHFL), 461-495 (GGKT…DLLP), 496-530 (KRIA…GVDT), 531-565 (SFKM…GYTP), 566-597 (TRSL…FQLS), 602-636 (KVQA…GITP), 637-667 (TVAS…LREQ), 671-705 (KKRL…GLQP), and 706-740 (SIEC…GRRI).

The protein belongs to the PPR family. P subfamily.

The protein resides in the mitochondrion. This Arabidopsis thaliana (Mouse-ear cress) protein is Pentatricopeptide repeat-containing protein At1g71210, mitochondrial.